A 253-amino-acid chain; its full sequence is Phosphoglycerate mutase 2 (253 aa).

At T3 the chain carries Phosphothreonine. Substrate-binding positions include 10-17 (RHGESTWN), 23-24 (CG), R62, 89-92 (ERHY), K100, and 116-117 (RR). H11 serves as the catalytic Tele-phosphohistidine intermediate. Residue S14 is modified to Phosphoserine. E89 functions as the Proton donor/acceptor in the catalytic mechanism. A Phosphoserine modification is found at S118. Phosphotyrosine occurs at positions 132 and 133. Residue S135 is modified to Phosphoserine. T152 bears the Phosphothreonine mark. 187–188 (GN) contacts substrate.

It belongs to the phosphoglycerate mutase family. BPG-dependent PGAM subfamily. As to quaternary structure, homodimer.

The enzyme catalyses (2R)-2-phosphoglycerate = (2R)-3-phosphoglycerate. It carries out the reaction (2R)-3-phospho-glyceroyl phosphate = (2R)-2,3-bisphosphoglycerate + H(+). Interconversion of 3- and 2-phosphoglycerate with 2,3-bisphosphoglycerate as the primer of the reaction. Can also catalyze the reaction of EC 5.4.2.4 (synthase), but with a reduced activity. This Bos taurus (Bovine) protein is Phosphoglycerate mutase 2 (PGAM2).